The sequence spans 391 residues: MKHPYPFGGQFMPEILMAPVQDLSNSWKSLQNHSDFKNELDSVLKNYAGRPTPLTEIKNFAKAIHGPRIFLKREDLLHTGAHKINNALGQCLLAKHLGKTRIIAETGAGQHGVATATACGCLGLECVIYMGAKDIERQKPNVDKMNLLGAEVISVNQGAQTLKDAVNEALRDWSKNYESTHYCLGSALGPSPYPEMVRNFQSVISLEVKSQLQEIGFSPDLLIACVGGGSNAIGFFHHFIPDTRVKLVGVEAGGLGIESGHHAARFATGRPGVLHGFYSYLLQDNEGQVLPTHSISAGLDYPAVGPDHAVLYESGRASYTVATDKAALEAFFLLSRLEGIIPALESSHALAELINIAPTLPKESVVVVNLSGRGDKDLEQITNLIKAGNNE.

N6-(pyridoxal phosphate)lysine is present on Lys-83.

It belongs to the TrpB family. In terms of assembly, tetramer of two alpha and two beta chains. It depends on pyridoxal 5'-phosphate as a cofactor.

It carries out the reaction (1S,2R)-1-C-(indol-3-yl)glycerol 3-phosphate + L-serine = D-glyceraldehyde 3-phosphate + L-tryptophan + H2O. It functions in the pathway amino-acid biosynthesis; L-tryptophan biosynthesis; L-tryptophan from chorismate: step 5/5. In terms of biological role, the beta subunit is responsible for the synthesis of L-tryptophan from indole and L-serine. The chain is Tryptophan synthase beta chain 2 (trpB2) from Chlamydia caviae (strain ATCC VR-813 / DSM 19441 / 03DC25 / GPIC) (Chlamydophila caviae).